A 370-amino-acid chain; its full sequence is Polyadenylate-binding protein 4-like (370 aa).

4 consecutive RRM domains span residues 10 to 88 (ASLY…WSQR), 98 to 174 (GNVF…RFKN), 190 to 267 (TNVY…RAQK), and 293 to 369 (VKLY…LAQR).

Belongs to the polyadenylate-binding protein type-1 family.

Functionally, may bind RNA. The protein is Polyadenylate-binding protein 4-like (PABPC4L) of Homo sapiens (Human).